Consider the following 85-residue polypeptide: MKLFLLLLISASMLIDGLVNADGYIRGSNGCKVSCLWGNEGCNKECRAYGASYGYCWTWGLACWCQGLPDDKTWKSESNTCGGKK.

The signal sequence occupies residues 1 to 21 (MKLFLLLLISASMLIDGLVNA). Residues 22 to 82 (DGYIRGSNGC…TWKSESNTCG (61 aa)) form the LCN-type CS-alpha/beta domain. 4 disulfides stabilise this stretch: cysteine 31/cysteine 81, cysteine 35/cysteine 56, cysteine 42/cysteine 63, and cysteine 46/cysteine 65. Glycine 82 is subject to Glycine amide.

In terms of tissue distribution, expressed by the venom gland.

It localises to the secreted. Functionally, depressant insect beta-toxins cause a transient contraction paralysis followed by a slow flaccid paralysis. They bind voltage-independently at site-4 of sodium channels (Nav) and shift the voltage of activation toward more negative potentials thereby affecting sodium channel activation and promoting spontaneous and repetitive firing. This toxin also displays an evident analgesic effect but is devoid of any toxicity on mice. The sequence is that of Beta-insect depressant toxin BmKITa from Olivierus martensii (Manchurian scorpion).